Reading from the N-terminus, the 195-residue chain is MARCKS-related protein (195 aa).

The tract at residues 1–195 is disordered; the sequence is MGSQSSKAPR…PTPASAEQNE (195 aa). A lipid anchor (N-myristoyl glycine) is attached at G2. Residue T14 is modified to Phosphothreonine. A compositionally biased stretch (low complexity) spans 16–26; the sequence is EEAAGASPAKA. S22, S36, S41, and S48 each carry phosphoserine. A compositionally biased stretch (low complexity) spans 53 to 64; the sequence is GTDEAAGATGDA. Residue S71 is modified to Phosphoserine. The span at 76–85 shows a compositional bias: basic and acidic residues; the sequence is AKGEVPPKET. The residue at position 85 (T85) is a Phosphothreonine. Over residues 86-98 the composition is skewed to basic residues; the sequence is PKKKKKFSFKKPF. The segment at 87-110 is effector domain involved in lipid-binding and calmodulin-binding; the sequence is KKKKKFSFKKPFKLSGLSFKRNRK. Residues S93, S101, S104, S119, S120, and S135 each carry the phosphoserine modification. A Phosphothreonine modification is found at T148. Phosphoserine occurs at positions 151, 162, and 165. Low complexity predominate over residues 153–195; that stretch reads EPQAKGAEASAASEEEAGPQATEPSTPSGPESGPTPASAEQNE. Phosphothreonine is present on residues T178 and T187.

The protein belongs to the MARCKS family. In terms of assembly, binds to filamentous actin (F-actin), but not to monomeric G-actin, independently of its phosphorylation status. Phosphorylated. Phosphorylation at Ser-120 and Thr-178 is non-redundantly catalyzed by MAPK8 in vivo. Phosphorylation at Thr-148 is preferentially catalyzed by MAPK8 in vivo, but this modification can also be catalyzed by other kinases in the absence of MAPK8. May be phosphorylated by protein kinase C, which disrupts the interaction with calmodulin.

The protein resides in the cytoplasm. The protein localises to the cytoskeleton. It localises to the cell membrane. Controls cell movement by regulating actin cytoskeleton homeostasis and filopodium and lamellipodium formation. When unphosphorylated, induces cell migration. When phosphorylated by MAPK8, induces actin bundles formation and stabilization, thereby reducing actin plasticity, hence restricting cell movement, including neuronal migration. May be involved in coupling the protein kinase C and calmodulin signal transduction systems. The protein is MARCKS-related protein (MARCKSL1) of Homo sapiens (Human).